The following is a 62-amino-acid chain: Large ribosomal subunit protein uL29 (62 aa).

This sequence belongs to the universal ribosomal protein uL29 family.

In Laribacter hongkongensis (strain HLHK9), this protein is Large ribosomal subunit protein uL29.